An 88-amino-acid chain; its full sequence is Cell division topological specificity factor (88 aa).

This sequence belongs to the MinE family.

Prevents the cell division inhibition by proteins MinC and MinD at internal division sites while permitting inhibition at polar sites. This ensures cell division at the proper site by restricting the formation of a division septum at the midpoint of the long axis of the cell. This chain is Cell division topological specificity factor, found in Herminiimonas arsenicoxydans.